A 234-amino-acid polypeptide reads, in one-letter code: Small ribosomal subunit protein eS1y (234 aa).

Residues 1–18 (MAVGKNKRISKGKKGGKK) are compositionally biased toward basic residues. Residues 1 to 20 (MAVGKNKRISKGKKGGKKKA) form a disordered region.

This sequence belongs to the eukaryotic ribosomal protein eS1 family. Component of the small ribosomal subunit. Mature ribosomes consist of a small (40S) and a large (60S) subunit. The 40S subunit contains about 33 different proteins and 1 molecule of RNA (18S). The 60S subunit contains about 49 different proteins and 3 molecules of RNA (25S, 5.8S and 5S).

Its subcellular location is the cytoplasm. The protein is Small ribosomal subunit protein eS1y of Vitis vinifera (Grape).